The following is a 149-amino-acid chain: D-aminoacyl-tRNA deacylase (149 aa).

A Gly-cisPro motif, important for rejection of L-amino acids motif is present at residues 137–138 (GP).

It belongs to the DTD family. In terms of assembly, homodimer.

The protein localises to the cytoplasm. It catalyses the reaction glycyl-tRNA(Ala) + H2O = tRNA(Ala) + glycine + H(+). The enzyme catalyses a D-aminoacyl-tRNA + H2O = a tRNA + a D-alpha-amino acid + H(+). Functionally, an aminoacyl-tRNA editing enzyme that deacylates mischarged D-aminoacyl-tRNAs. Also deacylates mischarged glycyl-tRNA(Ala), protecting cells against glycine mischarging by AlaRS. Acts via tRNA-based rather than protein-based catalysis; rejects L-amino acids rather than detecting D-amino acids in the active site. By recycling D-aminoacyl-tRNA to D-amino acids and free tRNA molecules, this enzyme counteracts the toxicity associated with the formation of D-aminoacyl-tRNA entities in vivo and helps enforce protein L-homochirality. The polypeptide is D-aminoacyl-tRNA deacylase (Syntrophotalea carbinolica (strain DSM 2380 / NBRC 103641 / GraBd1) (Pelobacter carbinolicus)).